A 295-amino-acid polypeptide reads, in one-letter code: Ubiquitin-conjugating enzyme E2-34 kDa (295 aa).

The UBC core domain maps to 7–169 (TASSLLLRQY…VKMEVERSKQ (163 aa)). Catalysis depends on C95, which acts as the Glycyl thioester intermediate. Residues 185–295 (ISQSKLDEPE…EDVERVSKKI (111 aa)) form a disordered region. Residue S186 is modified to Phosphoserine. Residues 189–200 (KLDEPESNKDMA) show a composition bias toward basic and acidic residues. Acidic residues-rich tracts occupy residues 207–226 (SDLDDDENGSVILQDDDYDD) and 234–265 (EDDDVYNYNDNDDDDERIEFEDDDDDDDDSID). Residues 269-279 (VMDRKQPHKAE) show a composition bias toward basic and acidic residues. 2 positions are modified to phosphoserine: S282 and S292.

The protein belongs to the ubiquitin-conjugating enzyme family. In terms of assembly, interacts with CDC53. Component of the E3 ubiquitin ligase complexes SCF with CDC53, SKP1/CBF3D, HRT1 and some F-box proteins like MET30 and CDC4.

It is found in the cytoplasm. Its subcellular location is the nucleus. The catalysed reaction is S-ubiquitinyl-[E1 ubiquitin-activating enzyme]-L-cysteine + [E2 ubiquitin-conjugating enzyme]-L-cysteine = [E1 ubiquitin-activating enzyme]-L-cysteine + S-ubiquitinyl-[E2 ubiquitin-conjugating enzyme]-L-cysteine.. The protein operates within protein modification; protein ubiquitination. In terms of biological role, catalyzes the covalent attachment of ubiquitin to other proteins. Capable, in vitro, to ubiquitinate histone H2A. Its function is as follows. Mediates the initiation of DNA replication (transition of G1 to S phase in cell cycle). Essential component of the E3 ubiquitin ligase complex SCF (SKP1-CUL1-F-box protein), which mediates the ubiquitination and subsequent proteasomal degradation of target proteins. Involved in the regulation of methionine biosynthesis genes and in the degradation of CDC6 together with CDC4 and CDC53. This chain is Ubiquitin-conjugating enzyme E2-34 kDa (CDC34), found in Saccharomyces cerevisiae (strain ATCC 204508 / S288c) (Baker's yeast).